The following is a 1399-amino-acid chain: DNA-directed RNA polymerase subunit beta' (1399 aa).

Zn(2+) contacts are provided by cysteine 70, cysteine 72, cysteine 85, and cysteine 88. 3 residues coordinate Mg(2+): aspartate 460, aspartate 462, and aspartate 464. The Zn(2+) site is built by cysteine 814, cysteine 888, cysteine 895, and cysteine 898.

It belongs to the RNA polymerase beta' chain family. As to quaternary structure, the RNAP catalytic core consists of 2 alpha, 1 beta, 1 beta' and 1 omega subunit. When a sigma factor is associated with the core the holoenzyme is formed, which can initiate transcription. The cofactor is Mg(2+). Requires Zn(2+) as cofactor.

The catalysed reaction is RNA(n) + a ribonucleoside 5'-triphosphate = RNA(n+1) + diphosphate. Its function is as follows. DNA-dependent RNA polymerase catalyzes the transcription of DNA into RNA using the four ribonucleoside triphosphates as substrates. This is DNA-directed RNA polymerase subunit beta' from Pseudomonas fluorescens (strain Pf0-1).